A 295-amino-acid chain; its full sequence is Glycine N-acyltransferase (295 aa).

Residues lysine 15, lysine 126, and lysine 140 each carry the N6-acetyllysine; alternate modification. N6-succinyllysine; alternate occurs at positions 15, 126, and 140. An N6-acetyllysine modification is found at lysine 158. Lysine 168 carries the post-translational modification N6-succinyllysine. The residue at position 255 (lysine 255) is an N6-acetyllysine; alternate. Lysine 255 is modified (N6-succinyllysine; alternate).

Belongs to the glycine N-acyltransferase family. In terms of tissue distribution, detected in liver (at protein level).

It is found in the mitochondrion. It carries out the reaction an acyl-CoA + glycine = an N-acylglycine + CoA + H(+). The catalysed reaction is benzoyl-CoA + glycine = N-benzoylglycine + CoA + H(+). Functionally, mitochondrial acyltransferase which transfers an acyl group to the N-terminus of glycine and glutamine, although much less efficiently. Can conjugate a multitude of substrates to form a variety of N-acylglycines, thereby detoxify xenobiotics, such as benzoic acid or salicylic acid, and endogenous organic acids, such as isovaleric acid. The polypeptide is Glycine N-acyltransferase (GLYAT) (Bos taurus (Bovine)).